A 110-amino-acid polypeptide reads, in one-letter code: MAGWFELSKSSDNQFRFVLKAGNGETILTSELYTSKASAEKGIASVRSNSPQEERYEKKTASNGKFYFNLKAANHQIIGSSQMYATAQSRETGIASVKVNGTSQTVKDNT.

2 consecutive repeat copies span residues 10-58 and 61-109.

It belongs to the UPF0339 family. Duplicated subfamily.

The protein is UPF0339 protein YegP (yegP) of Escherichia coli O6:H1 (strain CFT073 / ATCC 700928 / UPEC).